The following is a 131-amino-acid chain: MTDPIADYLTRLRNAISAKHRVVEVPASNLKKEITKILFDKGYILNYKFVEDGPQGTIKVALKYDSVNKVNAIKKLIRVSTPGLRKYTGYKDMPRVINGLGIAIISTSKGVMTNKEAAELKIGGEVLCYVY.

Belongs to the universal ribosomal protein uS8 family. In terms of assembly, part of the 30S ribosomal subunit. Contacts proteins S5 and S12.

Its function is as follows. One of the primary rRNA binding proteins, it binds directly to 16S rRNA central domain where it helps coordinate assembly of the platform of the 30S subunit. This is Small ribosomal subunit protein uS8 from Phocaeicola vulgatus (strain ATCC 8482 / DSM 1447 / JCM 5826 / CCUG 4940 / NBRC 14291 / NCTC 11154) (Bacteroides vulgatus).